Consider the following 374-residue polypeptide: Fasciclin-like arabinogalactan protein CTB11 (374 aa).

A signal peptide spans 1–18; sequence MHFPALAVAGCLLSRATA. FAS1 domains follow at residues 19 to 171 and 173 to 302; these read QSLD…DANM and LPHN…DGAL. Residues N52, N72, N120, N132, and N176 are each glycosylated (N-linked (GlcNAc...) asparagine). Residues 328–348 form a helical membrane-spanning segment; sequence ILASHQLTLLAVLAMALVSIL.

This sequence belongs to the fasciclin-like AGP family.

The protein localises to the membrane. Its pathway is mycotoxin biosynthesis. Fasciclin-like arabinogalactan protein; part of the gene cluster that mediates the biosynthesis of cercosporin, a light-activated, non-host-selective toxin. The perylenequinone chromophore of cercosporin absorbs light energy to attain an electronically-activated triplet state and produces active oxygen species such as the hydroxyl radical, superoxide, hydrogen peroxide or singlet oxygen upon reaction with oxygen molecules. These reactive oxygen species cause damage to various cellular components including lipids, proteins and nucleic acids. The first step of cercosporin biosynthesis is performed by the polyketide synthase CTB1 which catalyzes the formation of nor-toralactone. The starter unit acyltransferase (SAT) domain of CTB1 initiates polyketide extension by the selective utilization of acetyl-CoA, which is elongated to the heptaketide in the beta-ketoacyl synthase (KS) domain by successive condensations with six malonyl units introduced by the malonyl acyltransferase (MAT) domain. The product template (PT) domain catalyzes C4-C9 and C2-C11 aldol cyclizations and dehydrations to a trihydroxynaphthalene, which is thought to be delivered to the thioesterase (TE) domain for product release. The bifunctional enzyme CTB3 then methylates nor-toralactone to toralactone before conducting an unusual oxidative aromatic ring opening. The O-methyltransferase CTB2 further methylates the nascent OH-6 of the CBT3 product, blocking further oxidation at this site before the reductase CTB6 reduces the 2-oxopropyl ketone at position C7, giving naphthalene. The FAD-dependent monooxygenase CTB5 in concert with the multicopper oxidase CTB12 are responsible for homodimerization of naphthalene with CTB7 installing the dioxepine moiety, finally producing cercosporin. The fasciclin domain-containing protein CTB11 might act with CTB5 and CTB12 whereas the roles of CTB9 and CTB10 have still to be elucidated. The polypeptide is Fasciclin-like arabinogalactan protein CTB11 (Cercospora beticola (Sugarbeet leaf spot fungus)).